Here is a 147-residue protein sequence, read N- to C-terminus: Small ribosomal subunit protein bS6 (147 aa).

Residues 107–147 (KEGRERKARPARAERRDDTEAEDLSDEEGVEAEDFEEEQGV) are disordered. Residues 125-147 (TEAEDLSDEEGVEAEDFEEEQGV) are compositionally biased toward acidic residues.

The protein belongs to the bacterial ribosomal protein bS6 family.

In terms of biological role, binds together with bS18 to 16S ribosomal RNA. This chain is Small ribosomal subunit protein bS6, found in Cellvibrio japonicus (strain Ueda107) (Pseudomonas fluorescens subsp. cellulosa).